The sequence spans 378 residues: Beta sliding clamp (378 aa).

The protein belongs to the beta sliding clamp family. Forms a ring-shaped head-to-tail homodimer around DNA which binds and tethers DNA polymerases and other proteins to the DNA. The DNA replisome complex has a single clamp-loading complex (3 tau and 1 each of delta, delta', psi and chi subunits) which binds 3 Pol III cores (1 core on the leading strand and 2 on the lagging strand) each with a beta sliding clamp dimer. Additional proteins in the replisome are other copies of gamma, psi and chi, Ssb, DNA helicase and RNA primase. Interacts with YabA, and via YabA, with DnaA. During sporulation probably interacts with SirA.

The protein localises to the cytoplasm. The protein resides in the nucleoid. In terms of biological role, confers DNA tethering and processivity to DNA polymerases and other proteins. Acts as a clamp, forming a ring around DNA (a reaction catalyzed by the clamp-loading complex) which diffuses in an ATP-independent manner freely and bidirectionally along dsDNA. Initially characterized for its ability to contact the catalytic subunit of DNA polymerase III (Pol III), a complex, multichain enzyme responsible for most of the replicative synthesis in bacteria; Pol III exhibits 3'-5' exonuclease proofreading activity. The beta chain is required for initiation of replication as well as for processivity of DNA replication. Overexpression in vivo stimulates inititation of DNA replication from oriC. Increased levels of DnaN remove YabA from its association with DnaA on the chromosome, allowing DnaA to bind to its targets. Its interaction with DnaA probably serves as a sink to prevent excessive replication initiation. This Bacillus subtilis (strain 168) protein is Beta sliding clamp.